Consider the following 239-residue polypeptide: Ribonuclease 3 (239 aa).

The RNase III domain occupies His11–Asp133. Glu46 lines the Mg(2+) pocket. Asp50 is an active-site residue. Residues Asp119 and Glu122 each contribute to the Mg(2+) site. One can recognise a DRBM domain in the interval Asp160–Glu230.

Belongs to the ribonuclease III family. As to quaternary structure, homodimer. Requires Mg(2+) as cofactor.

The protein resides in the cytoplasm. The catalysed reaction is Endonucleolytic cleavage to 5'-phosphomonoester.. Its function is as follows. Digests double-stranded RNA. Involved in the processing of primary rRNA transcript to yield the immediate precursors to the large and small rRNAs (23S and 16S). Also processes some mRNAs, and tRNAs when they are encoded in the rRNA operon. CRISPR (clustered regularly interspaced short palindromic repeat) is an adaptive immune system that provides protection against mobile genetic elements (viruses, transposable elements and conjugative plasmids). CRISPR clusters contain spacers, sequences complementary to antecedent mobile elements, and target invading nucleic acids. CRISPR clusters are transcribed and processed into CRISPR RNA (crRNA). In this organism endogenous ribonuclease 3 and Cas9 are required for correct coprocessing of pre-crRNA and the trans-encoded small RNA (tracrRNA). Cas9, crRNA and tracRNA are required for cleavage of invading DNA. Involved in 3'-end processing but not 5'-end processing of crRNA and tracrRNA. The polypeptide is Ribonuclease 3 (Neisseria meningitidis serogroup C (strain 8013)).